The primary structure comprises 60 residues: Large ribosomal subunit protein uL30 (60 aa).

Belongs to the universal ribosomal protein uL30 family. In terms of assembly, part of the 50S ribosomal subunit.

The polypeptide is Large ribosomal subunit protein uL30 (Leptothrix cholodnii (strain ATCC 51168 / LMG 8142 / SP-6) (Leptothrix discophora (strain SP-6))).